The chain runs to 339 residues: Methionine import ATP-binding protein MetN 2 (339 aa).

Residues 2-241 (ISFNNVSKVY…PKTKTTQNFV (240 aa)) form the ABC transporter domain. Position 38-45 (38-45 (GFSGAGKS)) interacts with ATP.

The protein belongs to the ABC transporter superfamily. Methionine importer (TC 3.A.1.24) family. In terms of assembly, the complex is composed of two ATP-binding proteins (MetN), two transmembrane proteins (MetI) and a solute-binding protein (MetQ).

Its subcellular location is the cell membrane. It catalyses the reaction L-methionine(out) + ATP + H2O = L-methionine(in) + ADP + phosphate + H(+). It carries out the reaction D-methionine(out) + ATP + H2O = D-methionine(in) + ADP + phosphate + H(+). Functionally, part of the ABC transporter complex MetNIQ involved in methionine import. Responsible for energy coupling to the transport system. This is Methionine import ATP-binding protein MetN 2 from Bacillus cereus (strain ATCC 10987 / NRS 248).